The primary structure comprises 396 residues: Tryptophan synthase beta chain (396 aa).

K86 carries the N6-(pyridoxal phosphate)lysine modification.

The protein belongs to the TrpB family. In terms of assembly, tetramer of two alpha and two beta chains. It depends on pyridoxal 5'-phosphate as a cofactor.

It carries out the reaction (1S,2R)-1-C-(indol-3-yl)glycerol 3-phosphate + L-serine = D-glyceraldehyde 3-phosphate + L-tryptophan + H2O. It participates in amino-acid biosynthesis; L-tryptophan biosynthesis; L-tryptophan from chorismate: step 5/5. The beta subunit is responsible for the synthesis of L-tryptophan from indole and L-serine. This Vibrio vulnificus (strain CMCP6) protein is Tryptophan synthase beta chain.